Reading from the N-terminus, the 521-residue chain is CDP-diacylglycerol--glycerol-3-phosphate 3-phosphatidyltransferase (521 aa).

91–98 (ASLYLGKS) serves as a coordination point for ATP. 2 consecutive PLD phosphodiesterase domains span residues 177-203 (GLGLQHMKIYGFDNEVILSGANLSNDY) and 419-457 (NGWSYHAKGIWLSARDKNDANNWKPFITVIGSSNYTRRA). Residues histidine 182, lysine 184, and aspartate 189 contribute to the active site.

The protein belongs to the CDP-alcohol phosphatidyltransferase class-II family.

The protein localises to the mitochondrion. The enzyme catalyses a CDP-1,2-diacyl-sn-glycerol + sn-glycerol 3-phosphate = a 1,2-diacyl-sn-glycero-3-phospho-(1'-sn-glycero-3'-phosphate) + CMP + H(+). It participates in phospholipid metabolism; phosphatidylglycerol biosynthesis; phosphatidylglycerol from CDP-diacylglycerol: step 1/2. Functionally, essential for the viability of mitochondrial petite mutant. Catalyzes the committed step to the synthesis of the acidic phospholipids. The chain is CDP-diacylglycerol--glycerol-3-phosphate 3-phosphatidyltransferase (PGS1) from Saccharomyces cerevisiae (strain ATCC 204508 / S288c) (Baker's yeast).